The primary structure comprises 198 residues: NADH-quinone oxidoreductase subunit B (198 aa).

The segment covering 1–20 (MGLNPTQVSTSGSPQVSQPA) has biased composition (polar residues). A disordered region spans residues 1 to 29 (MGLNPTQVSTSGSPQVSQPATGVLDPRTG). Residues C77, C78, C142, and C172 each coordinate [4Fe-4S] cluster.

The protein belongs to the complex I 20 kDa subunit family. As to quaternary structure, NDH-1 is composed of 14 different subunits. Subunits NuoB, C, D, E, F, and G constitute the peripheral sector of the complex. The cofactor is [4Fe-4S] cluster.

The protein localises to the cell inner membrane. It carries out the reaction a quinone + NADH + 5 H(+)(in) = a quinol + NAD(+) + 4 H(+)(out). In terms of biological role, NDH-1 shuttles electrons from NADH, via FMN and iron-sulfur (Fe-S) centers, to quinones in the respiratory chain. The immediate electron acceptor for the enzyme in this species is believed to be ubiquinone. Couples the redox reaction to proton translocation (for every two electrons transferred, four hydrogen ions are translocated across the cytoplasmic membrane), and thus conserves the redox energy in a proton gradient. The polypeptide is NADH-quinone oxidoreductase subunit B (Afipia carboxidovorans (strain ATCC 49405 / DSM 1227 / KCTC 32145 / OM5) (Oligotropha carboxidovorans)).